The primary structure comprises 1819 residues: Protein REDUCED CHLOROPLAST COVERAGE 2 (1819 aa).

Residues 1–17 (MAPKAGKTKPHKSKGEK) are compositionally biased toward basic residues. Disordered regions lie at residues 1–23 (MAPKAGKTKPHKSKGEKKKKEEK), 128–180 (KPPV…GACE), 595–619 (QASSKSESKKTEDPKPEPAVKGLGK), and 634–664 (KANKTEQGKEAPANDTDNTSETEDQKELEKQ). Basic and acidic residues-rich tracts occupy residues 135-145 (LPKDSEKKESG) and 600-612 (SESKKTEDPKPEP). The region spanning 329 to 603 (EDETWGGDGG…NQASSKSESK (275 aa)) is the Clu domain. A coiled-coil region spans residues 649–680 (TDNTSETEDQKELEKQNEEIEKMWKELVTETA). TPR repeat units lie at residues 892-925 (GRTLLESSKTSLDKGKLEDAVNYGTKALAKLVAV), 934-967 (AGAYSLLAVVLYHTGDFNQATIYQQKALDINERE), 976-1009 (MKSYGDLAVFYYRLQHTELALKYVNRALYLLHLT), 1018-1051 (AATYINVAMMEEGMKNAHVALRYLHEALKCNQRL), and 1060-1093 (AASYHAIAIALSLMDAYSLSVQHEQTTLQILQAK). Disordered stretches follow at residues 1152 to 1360 (SGIK…PMLS), 1413 to 1456 (KVNA…SPKE), 1468 to 1513 (KAFP…SESV), 1527 to 1573 (LKTV…ASAP), 1616 to 1670 (STPH…PRIM), and 1731 to 1809 (LVSE…DYSD). 2 stretches are compositionally biased toward basic and acidic residues: residues 1199 to 1224 (SSDKENKSETKSEEKKVENFDLEQSK) and 1230 to 1239 (KLVKPEATVH). Serine 1244 carries the phosphoserine modification. Residues 1269 to 1313 (KLNTNFMNVTQQPSRSRGKSTNFTSPRTSSNELSISVAGSTSSPA) are compositionally biased toward polar residues. Serine 1320 is modified (phosphoserine). A compositionally biased stretch (polar residues) spans 1343–1354 (LASSACTEQINK). Composition is skewed to polar residues over residues 1496–1511 (CLLNKSPTANDSNGSE) and 1536–1546 (NLPNGDSSPKS). Positions 1551-1566 (DGEKQDACEAQKEMSK) are enriched in basic and acidic residues. Residues 1650 to 1665 (SFPNSTESNGEANQFN) are compositionally biased toward polar residues. A compositionally biased stretch (basic and acidic residues) spans 1742 to 1759 (SEEKSGSEEESNNDKNAG). Residues 1767 to 1778 (QETTDTPENGHS) are compositionally biased toward polar residues. Residues 1785–1800 (TTSHETCDEKNGERQG) show a composition bias toward basic and acidic residues.

Expressed in the non-epidermal tissues of the true leaves. Not detected in the vegetative shoot meristem and leaf primordia.

Its subcellular location is the nucleus. It is found in the cytoplasm. It localises to the cytosol. Functionally, negatively regulates meristematic tissue proliferation by integrating developmental signals with carbon source availability. May act as the scaffold of a protein complex, which sequesters key factors that are required for the G2 to M transition in meristematic tissues. Together with REC2, REC3 and FMT/CLU, contributes to the establishment of the cellular volume devoted to the chloroplast compartment. This is Protein REDUCED CHLOROPLAST COVERAGE 2 from Arabidopsis thaliana (Mouse-ear cress).